A 638-amino-acid chain; its full sequence is 1-deoxy-D-xylulose-5-phosphate synthase (638 aa).

Thiamine diphosphate is bound by residues histidine 71 and 112–114 (SHA). Aspartate 144 provides a ligand contact to Mg(2+). Residues 145 to 146 (GA), asparagine 173, tyrosine 284, and glutamate 365 each bind thiamine diphosphate. Position 173 (asparagine 173) interacts with Mg(2+).

Belongs to the transketolase family. DXPS subfamily. As to quaternary structure, homodimer. Requires Mg(2+) as cofactor. Thiamine diphosphate is required as a cofactor.

It catalyses the reaction D-glyceraldehyde 3-phosphate + pyruvate + H(+) = 1-deoxy-D-xylulose 5-phosphate + CO2. It functions in the pathway metabolic intermediate biosynthesis; 1-deoxy-D-xylulose 5-phosphate biosynthesis; 1-deoxy-D-xylulose 5-phosphate from D-glyceraldehyde 3-phosphate and pyruvate: step 1/1. Catalyzes the acyloin condensation reaction between C atoms 2 and 3 of pyruvate and glyceraldehyde 3-phosphate to yield 1-deoxy-D-xylulose-5-phosphate (DXP). This is 1-deoxy-D-xylulose-5-phosphate synthase from Mycobacterium sp. (strain JLS).